We begin with the raw amino-acid sequence, 182 residues long: Dual-action ribosomal maturation protein DarP (182 aa).

It belongs to the DarP family.

The protein resides in the cytoplasm. Functionally, member of a network of 50S ribosomal subunit biogenesis factors which assembles along the 30S-50S interface, preventing incorrect 23S rRNA structures from forming. Promotes peptidyl transferase center (PTC) maturation. In Serratia proteamaculans (strain 568), this protein is Dual-action ribosomal maturation protein DarP.